A 1139-amino-acid chain; its full sequence is Integrin alpha ina-1 (1139 aa).

The first 19 residues, Met1–Ser19, serve as a signal peptide directing secretion. At Phe20–Pro1084 the chain is on the extracellular side. The FG-GAP 1 repeat unit spans residues Asn21–Gly85. N-linked (GlcNAc...) asparagine glycosylation is found at Asn108 and Asn136. 6 FG-GAP repeats span residues Arg111–Thr171, Leu180–Ser231, Asn242–Lys302, Glu307–Gln370, His378–Phe438, and Gly448–Arg510. Asn313 carries an N-linked (GlcNAc...) asparagine glycan. Asn580, Asn788, Asn851, and Asn1026 each carry an N-linked (GlcNAc...) asparagine glycan. A helical transmembrane segment spans residues Trp1085–Leu1106. Residues Ser1107–Leu1139 are Cytoplasmic-facing.

It belongs to the integrin alpha chain family. Heterodimer of an alpha and a beta subunit. Alpha ina-1 associates with beta pat-3. Interacts (via cytoplasmic domain) with src-1 (when phosphorylated at 'Tyr-416').

The protein resides in the membrane. Its subcellular location is the cell projection. It localises to the phagocytic cup. The protein localises to the cytoplasmic vesicle. It is found in the phagosome membrane. Plays a role in cell migration, axon fasciculation, and morphogenesis. During gonad morphogenesis, involved in distal tip cell (DTC)-mediated guidance of gonad elongation, in maintaining their sharp tapering morphology and in their migration. Involved in the anterior-posterior positioning of QR neuroblast descendants by regulating the migratory speed of QR.p. Probably by acting as a receptor for apoptotic cells, plays a role in the clearance of apoptotic cells during mid-embryogenesis. This chain is Integrin alpha ina-1 (ina-1), found in Caenorhabditis elegans.